Here is an 838-residue protein sequence, read N- to C-terminus: DNA gyrase subunit A (838 aa).

The Topo IIA-type catalytic domain occupies 41–510 (LPEVRDGLKP…ADGDVSDEDL (470 aa)). Tyrosine 129 (O-(5'-phospho-DNA)-tyrosine intermediate) is an active-site residue. The GyrA-box signature appears at 537 to 543 (QKRGGKG).

The protein belongs to the type II topoisomerase GyrA/ParC subunit family. Heterotetramer, composed of two GyrA and two GyrB chains. In the heterotetramer, GyrA contains the active site tyrosine that forms a transient covalent intermediate with DNA, while GyrB binds cofactors and catalyzes ATP hydrolysis. It depends on Mg(2+) as a cofactor.

The protein localises to the cytoplasm. The catalysed reaction is ATP-dependent breakage, passage and rejoining of double-stranded DNA.. DNA supercoiling is inhibited by EDTA, novobiocin, coumermycin and ciprofloxacin. Functionally, a type II topoisomerase that negatively supercoils closed circular double-stranded (ds) DNA in an ATP-dependent manner to modulate DNA topology and maintain chromosomes in an underwound state. Also catalyzes the interconversion of other topological isomers of double-stranded DNA rings, including catenanes and knotted rings. Relaxes negatively supercoiled DNA in an ATP-independent manner. A linear reaction intermediate can be trapped in the presence of the antibiotic ciprofloxacin. Negative supercoiling favors strand separation, and DNA replication, transcription, recombination and repair, all of which involve strand separation. Type II topoisomerases break and join 2 DNA strands simultaneously in an ATP-dependent manner. The protein is DNA gyrase subunit A of Mycobacterium bovis (strain BCG / Pasteur 1173P2).